The sequence spans 499 residues: MAEKLMKYADATKKYDVVFGLETHVELSTNTKLFCPAHIEFGGEPNTELTPVSLGLPGSLPVINKTAVDYAIKLGLALHCEIAEWSQFARKNYFYPDMPRDYQISQYDKPTNGNGYLDVELEDGTVFRVPIERAHIEDDAGKNTHVGGADGRIEGADHSLVDYNRAGVPLIEIVTKPIEGAGDRAPEIAGAYVRAIRDIVRALNISHARMEQGNMRADVNVSLRPSPDAPYGTRSETKNVNSFRGIEKTIQYEIRRQAARLDDGKEILQETRHWDEATQTTAGGRLKSDADDYRYFPDPDLVMLHITKEHIEEMKAQMPEMPRERRNRLKSEWGLSDLQMRDILNADALDLIEETVKAGAKAAGARKWWLGELSREANAKGVSLEELPITPADVAEVEKLIASGKLNDKLAKQTVEGVLKGEGTPDEVVKKHDYKIVEDNGAIEAAVDAAFEANPDVVEKLKSGNMKPMGVIIGAVMKATRGQADAKAVTKVVMGKIKG.

This sequence belongs to the GatB/GatE family. GatB subfamily. Heterotrimer of A, B and C subunits.

The enzyme catalyses L-glutamyl-tRNA(Gln) + L-glutamine + ATP + H2O = L-glutaminyl-tRNA(Gln) + L-glutamate + ADP + phosphate + H(+). It carries out the reaction L-aspartyl-tRNA(Asn) + L-glutamine + ATP + H2O = L-asparaginyl-tRNA(Asn) + L-glutamate + ADP + phosphate + 2 H(+). Allows the formation of correctly charged Asn-tRNA(Asn) or Gln-tRNA(Gln) through the transamidation of misacylated Asp-tRNA(Asn) or Glu-tRNA(Gln) in organisms which lack either or both of asparaginyl-tRNA or glutaminyl-tRNA synthetases. The reaction takes place in the presence of glutamine and ATP through an activated phospho-Asp-tRNA(Asn) or phospho-Glu-tRNA(Gln). The polypeptide is Aspartyl/glutamyl-tRNA(Asn/Gln) amidotransferase subunit B (Bifidobacterium longum (strain DJO10A)).